A 422-amino-acid polypeptide reads, in one-letter code: Solute carrier family 35 member D3 (422 aa).

10 helical membrane-spanning segments follow: residues 9 to 29 (VLGISVAIAHGVFSGSLNILL), 38 to 58 (FSFLTLVQCLTSSTAALSLEL), 64 to 84 (LIAVPPFGLSLARSFAGVAVL), 103 to 123 (MYVVFKRCLPLVTMLIGVLVL), 131 to 151 (GVLAAVLITTCGAALAGAGDL), 155 to 175 (PIGYVTGVLAVLVHAAYLVLI), 187 to 207 (LTAQYVIAVSATPLLVICSFA), 224 to 244 (AMVSIFVACILIGCAMNFTTL), 257 to 277 (FVGVVKSIATITVGMVAFSDV), and 280 to 300 (TSLFIAGVVVNTLGSIIYCVA). Residues 339-365 (AKSGNSEPESAEGAGDSVQQGGQESRG) are disordered. A compositionally biased stretch (polar residues) spans 355-364 (SVQQGGQESR).

The protein belongs to the TPT transporter family. SLC35D subfamily. As to quaternary structure, could interact with ATG14, BECN1 and PIK3C3 that form the PI3KC3-C1/AIC/autophagy initiation complex; enhancing the formation of the AIC and promoting autophagy. Expressed in brain. Expressed in subsets of dopaminergic neurons. Expressed in maturing megakaryocytes.

The protein localises to the cytoplasmic vesicle. It is found in the secretory vesicle. The protein resides in the synaptic vesicle membrane. It localises to the early endosome membrane. Its subcellular location is the endoplasmic reticulum membrane. It catalyses the reaction UDP-alpha-D-glucose(in) = UDP-alpha-D-glucose(out). Its activity is regulated as follows. Inhibited by proton uncouplers that directly abolish the proton electrochemical gradient. Probable UDP-glucose transmembrane transporter involved in UDP-glucose transport from the cytosol to the lumen of synaptic vesicles. It is involved in platelet dense granules maturation. Its function is as follows. Alternatively, could function as a molecular adapter enhancing the formation of the PI3KC3-C1/AIC/autophagy initiation complex to promote autophagy in dopaminergic neurons. Could also regulate the plasma membrane localization of the D(1A) dopamine receptor/DRD1 and dopamine signaling. The sequence is that of Solute carrier family 35 member D3 from Mus musculus (Mouse).